Reading from the N-terminus, the 483-residue chain is MTMPVNGAHKDADLWSSHDKMLAQPLKDSDVEVYNIIKKESNRQRVGLELFASENFASQAVLEALGSCLNNKYSEGYPGQRYYGGTEFIDELETLCQKRALQAYKLDPQCWGVNVQPYSGSPANFAVYTALVEPHGRIMGLDLPDGGHLTHGFMTGKKKISATSIFFESMPYKVNPDTGYINYDQLEENARLFHPKLIIAGTSCYSRNLDYARLRKIADENGAYLMADMAHISGLVAAGVVPSPFEHCHVVTTTTHKTLRGCRAGMIFYRKGVQSVDPKTGKEILYNLESLINSAVFPGLQGGPHNHAIAGVAVALKQAMTLEFKVYQHQVVANCRALSEALTELGYKIVTGGSDNHLILVDLRSKGTDGGRAEKVLEACSIACNKNTCPGDRSALRPSGLRLGTPALTSRGLLEKDFQKVAHFIHRGIELTLQIQSDTGVRATLKEFKERLAGDKYQGAVQALREKVESFASLFPLPGLPDF.

Residue lysine 257 is modified to N6-(pyridoxal phosphate)lysine.

It belongs to the SHMT family. As to quaternary structure, homotetramer. Identified in complex with ABRAXAS2 and the other subunits of the BRISC complex, at least composed of ABRAXAS2, BRCC3/BRCC36, BABAM2 and BABAM1/NBA1. Requires pyridoxal 5'-phosphate as cofactor.

It is found in the cytoplasm. It carries out the reaction (6R)-5,10-methylene-5,6,7,8-tetrahydrofolate + glycine + H2O = (6S)-5,6,7,8-tetrahydrofolate + L-serine. It participates in one-carbon metabolism; tetrahydrofolate interconversion. In terms of biological role, interconversion of serine and glycine. The chain is Serine hydroxymethyltransferase, cytosolic (SHMT1) from Pongo abelii (Sumatran orangutan).